A 37-amino-acid polypeptide reads, in one-letter code: Cytochrome b6-f complex subunit 5 (37 aa).

The chain crosses the membrane as a helical span at residues 5–25 (LLCGIVLGLIPVTLLGLFVAA).

This sequence belongs to the PetG family. As to quaternary structure, the 4 large subunits of the cytochrome b6-f complex are cytochrome b6, subunit IV (17 kDa polypeptide, PetD), cytochrome f and the Rieske protein, while the 4 small subunits are PetG, PetL, PetM and PetN. The complex functions as a dimer.

It localises to the cellular thylakoid membrane. Functionally, component of the cytochrome b6-f complex, which mediates electron transfer between photosystem II (PSII) and photosystem I (PSI), cyclic electron flow around PSI, and state transitions. PetG is required for either the stability or assembly of the cytochrome b6-f complex. The sequence is that of Cytochrome b6-f complex subunit 5 from Synechococcus sp. (strain WH7803).